A 156-amino-acid chain; its full sequence is MVAVGSTLPKVTLWENKPEEVVEFPSQGKFIIVGVPGAFTPPCSSQVPGYIANEKQFAAKGISGIYVVAVNDVFVTKAWKKSFDGGEQSGVHFVADWNGEFTKAFDAGFDASGLLGPLRSKRYAAVVENGKVVKVFIENEVTDVDISSADKVLSSL.

The Thioredoxin domain maps to 2–156 (VAVGSTLPKV…SSADKVLSSL (155 aa)). The active-site Cysteine sulfenic acid (-SOH) intermediate is Cys-43.

This sequence belongs to the peroxiredoxin family. Prx5 subfamily. In terms of assembly, homodimer; disulfide-linked, upon oxidation.

The protein localises to the cytoplasm. Its subcellular location is the nucleus. Functionally, may act as a chaperone rather than a peroxidase. Has no thioredoxin-dependent peroxidase activity. Shows weak chaperone activity. This chain is Peroxisomal membrane associated protein 20, found in Schizosaccharomyces pombe (strain 972 / ATCC 24843) (Fission yeast).